The following is a 131-amino-acid chain: UPF0344 protein Sca_0577 (131 aa).

4 consecutive transmembrane segments (helical) span residues 1-21 (MLHLHIFSWVIGIILFIVSYI), 42-62 (LFLVLILFSGVWQVVEEFATA), 69-89 (LLTLKMICGIGVVALMEVTLV), and 99-119 (GLFWGTIALIIVTMALGIILP).

This sequence belongs to the UPF0344 family.

Its subcellular location is the cell membrane. The polypeptide is UPF0344 protein Sca_0577 (Staphylococcus carnosus (strain TM300)).